A 480-amino-acid chain; its full sequence is Cysteine--tRNA ligase (480 aa).

C29 is a binding site for Zn(2+). A 'HIGH' region motif is present at residues 31-41; that stretch reads VTVYDHCHIGH. Residues C209, H234, and E238 each contribute to the Zn(2+) site. Residues 266–270 carry the 'KMSKS' region motif; it reads KMSKS. K269 is an ATP binding site.

Belongs to the class-I aminoacyl-tRNA synthetase family. Monomer. Zn(2+) serves as cofactor.

Its subcellular location is the cytoplasm. It carries out the reaction tRNA(Cys) + L-cysteine + ATP = L-cysteinyl-tRNA(Cys) + AMP + diphosphate. This Geobacter sp. (strain M21) protein is Cysteine--tRNA ligase.